Reading from the N-terminus, the 511-residue chain is 3-octaprenyl-4-hydroxybenzoate carboxy-lyase (511 aa).

Asparagine 176 contacts Mn(2+). Prenylated FMN-binding positions include 179-181 (IYR), 193-195 (RWL), and 198-199 (RG). Glutamate 242 contributes to the Mn(2+) binding site. Aspartate 311 functions as the Proton donor in the catalytic mechanism.

It belongs to the UbiD family. Homohexamer. Requires prenylated FMN as cofactor. Mn(2+) is required as a cofactor.

The protein resides in the cell membrane. It catalyses the reaction a 4-hydroxy-3-(all-trans-polyprenyl)benzoate + H(+) = a 2-(all-trans-polyprenyl)phenol + CO2. It participates in cofactor biosynthesis; ubiquinone biosynthesis. Its function is as follows. Catalyzes the decarboxylation of 3-octaprenyl-4-hydroxy benzoate to 2-octaprenylphenol, an intermediate step in ubiquinone biosynthesis. The sequence is that of 3-octaprenyl-4-hydroxybenzoate carboxy-lyase from Laribacter hongkongensis (strain HLHK9).